The chain runs to 458 residues: Zinc finger protein 239 (458 aa).

Lys108 is covalently cross-linked (Glycyl lysine isopeptide (Lys-Gly) (interchain with G-Cter in SUMO2)). Ser191 carries the post-translational modification Phosphoserine. C2H2-type zinc fingers lie at residues 207 to 229 (YECS…QRDH), 235 to 257 (YKCE…QAVH), 263 to 285 (YKCD…HAVH), 291 to 313 (YKCD…QRVH), 319 to 341 (YECE…QRVH), 347 to 369 (YKCG…RCIH), 375 to 397 (YQCY…LRVH), 403 to 425 (YHCG…QRVH), and 431 to 453 (YECS…QRVH).

This sequence belongs to the krueppel C2H2-type zinc-finger protein family.

It is found in the nucleus. Its function is as follows. May be involved in transcriptional regulation. This is Zinc finger protein 239 (ZNF239) from Homo sapiens (Human).